The sequence spans 123 residues: Large ribosomal subunit protein uL14 (123 aa).

This sequence belongs to the universal ribosomal protein uL14 family. As to quaternary structure, part of the 50S ribosomal subunit. Forms a cluster with proteins L3 and L19. In the 70S ribosome, L14 and L19 interact and together make contacts with the 16S rRNA in bridges B5 and B8.

Functionally, binds to 23S rRNA. Forms part of two intersubunit bridges in the 70S ribosome. The polypeptide is Large ribosomal subunit protein uL14 (Corynebacterium jeikeium (strain K411)).